Reading from the N-terminus, the 627-residue chain is Protein EXECUTER 2, chloroplastic (627 aa).

Disordered stretches follow at residues 1–34, 212–277, and 308–359; these read MSAATACASPAAARPPLHIPLRSPPSAAHLPSAA, PTKG…AKDS, and EAEL…SKSP. The N-terminal 45 residues, 1-45, are a transit peptide targeting the chloroplast; sequence MSAATACASPAAARPPLHIPLRSPPSAAHLPSAAASRRASSAACR. Residues 217–229 are compositionally biased toward low complexity; sequence SSASSVSSATAES. 2 stretches are compositionally biased toward acidic residues: residues 308 to 321 and 331 to 353; these read EAELASDSSEELVQ and SLEDSTTEELQQDDVPDGDSDSA.

It localises to the plastid. Its subcellular location is the chloroplast. Its function is as follows. Together with EX1, enables higher plants to perceive singlet oxygen as a stress signal in plastid that activates a genetically determined nuclear stress response program which triggers a programmed cell death (PCD). This transfer of singlet oxygen-induced stress-related signals from the plastid to the nucleus that triggers genetically controlled PCD pathway is unique to photosynthetic eukaryotes and operates under mild stress conditions, impeding photosystem II (PSII) without causing photooxidative damage of the plant. The protein is Protein EXECUTER 2, chloroplastic of Oryza sativa subsp. japonica (Rice).